A 317-amino-acid polypeptide reads, in one-letter code: NAD-dependent protein deacetylase Sirt6 (317 aa).

Residues 27–273 (DEVVAEKCQE…SKVCKLLGVE (247 aa)) form the Deacetylase sirtuin-type domain. The NAD(+) site is built by Ala53, Thr57, Phe64, Arg65, Trp71, Gln113, and His133. The Proton acceptor role is filled by His133. Zn(2+) contacts are provided by Cys141, Cys144, Cys166, and Cys177. The NAD(+) site is built by Gly215, Asn241, Gln243, and Val259.

Belongs to the sirtuin family. Class IV subfamily. Zn(2+) serves as cofactor. In terms of tissue distribution, widely expressed.

It is found in the nucleus. The protein resides in the chromosome. It catalyses the reaction N(6)-acetyl-L-lysyl-[protein] + NAD(+) + H2O = 2''-O-acetyl-ADP-D-ribose + nicotinamide + L-lysyl-[protein]. NAD-dependent histone deacylase that acts as a regulator of life span. In Drosophila melanogaster (Fruit fly), this protein is NAD-dependent protein deacetylase Sirt6.